The chain runs to 563 residues: Pyruvate decarboxylase isozyme 1 (563 aa).

Ser2 is modified (N-acetylserine). Positions 28, 115, and 157 each coordinate pyruvate. Residue Arg161 is modified to Omega-N-methylarginine. A Glycyl lysine isopeptide (Lys-Gly) (interchain with G-Cter in ubiquitin) cross-link involves residue Lys212. Ser223 bears the Phosphoserine mark. Residue Arg224 coordinates pyruvate. A Glycyl lysine isopeptide (Lys-Gly) (interchain with G-Cter in ubiquitin) cross-link involves residue Lys233. Position 266 is a phosphothreonine (Thr266). Glycyl lysine isopeptide (Lys-Gly) (interchain with G-Cter in ubiquitin) cross-links involve residues Lys269 and Lys332. Phosphothreonine is present on residues Thr336 and Thr353. Thiamine diphosphate contacts are provided by residues Thr390 and 413–415 (GSI). Asp444 contributes to the Mg(2+) binding site. Thiamine diphosphate contacts are provided by residues 445-446 (GS) and 471-476 (NDGYTI). Mg(2+) is bound by residues Asn471 and Gly473. Glu477 is a pyruvate binding site. Glycyl lysine isopeptide (Lys-Gly) (interchain with G-Cter in ubiquitin) cross-links involve residues Lys484, Lys505, and Lys520. Thr522 bears the Phosphothreonine mark. Ser526 bears the Phosphoserine mark.

The protein belongs to the TPP enzyme family. As to quaternary structure, homotetramer. Mg(2+) serves as cofactor. Requires thiamine diphosphate as cofactor. Post-translationally, cleavage of N-terminal methionine and N-terminal acetylation by NAT1/ARD1.

The protein resides in the cytoplasm. It is found in the nucleus. It catalyses the reaction pyruvate + H(+) = acetaldehyde + CO2. The enzyme catalyses 3-methyl-2-oxobutanoate + H(+) = 2-methylpropanal + CO2. The catalysed reaction is (S)-3-methyl-2-oxopentanoate + H(+) = 2-methylbutanal + CO2. It carries out the reaction indole-3-pyruvate + H(+) = indole-3-acetaldehyde + CO2. It catalyses the reaction 3-phenylpyruvate + H(+) = 2-phenylacetaldehyde + CO2. The enzyme catalyses 2-oxobutanoate + H(+) = propanal + CO2. The catalysed reaction is 2-oxopentanoate + H(+) = butanal + CO2. It carries out the reaction 2 acetaldehyde = acetoin. It catalyses the reaction acetaldehyde + pyruvate + H(+) = acetoin + CO2. It participates in fermentation; ethanol fermentation. The protein operates within amino-acid degradation; Ehrlich pathway. Allosterically activated by its substrate, pyruvate. Its function is as follows. Major of three pyruvate decarboxylases (PDC1, PDC5, PDC6) implicated in the nonoxidative conversion of pyruvate to acetaldehyde and carbon dioxide during alcoholic fermentation. Most of the produced acetaldehyde is subsequently reduced to ethanol, but some is required for cytosolic acetyl-CoA production for biosynthetic pathways. The enzyme is also one of five 2-oxo acid decarboxylases (PDC1, PDC5, PDC6, ARO10, and THI3) able to decarboxylate more complex 2-oxo acids (alpha-ketoacids) than pyruvate, which seem mainly involved in amino acid catabolism. Here the enzyme catalyzes the decarboxylation of amino acids, which, in a first step, have been transaminated to the corresponding 2-oxo acids. In a third step, the resulting aldehydes are reduced to alcohols, collectively referred to as fusel oils or alcohols. Its preferred substrates are the transaminated amino acids derived from threonine (2-oxobutanoate), norvaline (2-oxopentanoate), valine (3-methyl-2-oxobutanoate, also alpha-keto-isovalerate), isoleucine ((3S)-3-methyl-2-oxopentanoate, also alpha-keto-beta-methylvalerate), phenylalanine (phenylpyruvate), and tryptophan (3-(indol-3-yl)pyruvate), whereas transaminated leucine is no substrate. In a side-reaction the carbanionic intermediate (or active aldehyde) generated by decarboxylation or by activation of an aldehyde can react with an aldehyde via condensation (or carboligation) yielding a 2-hydroxy ketone, collectively called acyloins. The chain is Pyruvate decarboxylase isozyme 1 from Saccharomyces cerevisiae (strain ATCC 204508 / S288c) (Baker's yeast).